We begin with the raw amino-acid sequence, 98 residues long: NADH-ubiquinone oxidoreductase chain 4L (98 aa).

3 helical membrane passes run 1-21 (MPIIYMNIMLAFTISLLGMLT), 29-49 (SLLCLEGMMLSLFIMSTLMAL), and 58-78 (IVPIALLVFAACEAAVGLSLL).

This sequence belongs to the complex I subunit 4L family. As to quaternary structure, core subunit of respiratory chain NADH dehydrogenase (Complex I) which is composed of 45 different subunits.

It is found in the mitochondrion inner membrane. The catalysed reaction is a ubiquinone + NADH + 5 H(+)(in) = a ubiquinol + NAD(+) + 4 H(+)(out). Core subunit of the mitochondrial membrane respiratory chain NADH dehydrogenase (Complex I) which catalyzes electron transfer from NADH through the respiratory chain, using ubiquinone as an electron acceptor. Part of the enzyme membrane arm which is embedded in the lipid bilayer and involved in proton translocation. The polypeptide is NADH-ubiquinone oxidoreductase chain 4L (MT-ND4L) (Presbytis melalophos (Mitred leaf monkey)).